Reading from the N-terminus, the 237-residue chain is Phosphoribosylaminoimidazole-succinocarboxamide synthase (237 aa).

It belongs to the SAICAR synthetase family.

The enzyme catalyses 5-amino-1-(5-phospho-D-ribosyl)imidazole-4-carboxylate + L-aspartate + ATP = (2S)-2-[5-amino-1-(5-phospho-beta-D-ribosyl)imidazole-4-carboxamido]succinate + ADP + phosphate + 2 H(+). It participates in purine metabolism; IMP biosynthesis via de novo pathway; 5-amino-1-(5-phospho-D-ribosyl)imidazole-4-carboxamide from 5-amino-1-(5-phospho-D-ribosyl)imidazole-4-carboxylate: step 1/2. The sequence is that of Phosphoribosylaminoimidazole-succinocarboxamide synthase from Fusobacterium nucleatum subsp. nucleatum (strain ATCC 25586 / DSM 15643 / BCRC 10681 / CIP 101130 / JCM 8532 / KCTC 2640 / LMG 13131 / VPI 4355).